Reading from the N-terminus, the 149-residue chain is Deoxyuridine 5'-triphosphate nucleotidohydrolase (149 aa).

Residues 68 to 70 (RSG), asparagine 81, and 85 to 87 (LID) contribute to the substrate site.

Belongs to the dUTPase family. Requires Mg(2+) as cofactor.

The catalysed reaction is dUTP + H2O = dUMP + diphosphate + H(+). It functions in the pathway pyrimidine metabolism; dUMP biosynthesis; dUMP from dCTP (dUTP route): step 2/2. Its function is as follows. This enzyme is involved in nucleotide metabolism: it produces dUMP, the immediate precursor of thymidine nucleotides and it decreases the intracellular concentration of dUTP so that uracil cannot be incorporated into DNA. The protein is Deoxyuridine 5'-triphosphate nucleotidohydrolase of Nitrosomonas eutropha (strain DSM 101675 / C91 / Nm57).